A 727-amino-acid polypeptide reads, in one-letter code: MQNQLTIKEIALELGISREEFDLIEEKLGRIPNEFETYLFSAQWSEHCGYKHSKHYLKKINESYESENAGYVQIGGKAVVFKVESHNHPSAVEPYQGAATGIGGIVRDILAMGARPIALLDSLKFGNVFDPKVKNIFEGVVSGISDYGNSIGVPTVGGETSFNEIYSTNPLINVMCVGVANKNHLASSHADGPDKLLVYVGSKTGRDGIHGASFASKKLSGKDDRPSVQVGDPFTEKNLIEATLEILKIKGVRACQDMGAAGVLSSTSEMAYKGGVGCELYLDNIPKRQEDIEPWEIMLSESQERMLFLVNPGTEKKVEAICNKYLIDFAVIGKTISTPHYVVKENSEGKVLADLPIDILVNAPEYYRNNTIPSTYILNKAKKYPKTKIKDIDKILKILLSNHNISSKKWIYQQYDYKVETNTIFIPEQADSAVLWLKKTQKAIAVTIDSNELYTYLDPFEGTKNVVYEAARNLISVGAKPLAITDNLNFGDPDDPEVSWQFEKSIEGLIEASKELSTPVVSGNVSFYNSYHETSIFPTPVIGMIGEIKDIKKIVNLKFKDCGDVVYLIGKTDINVDKIGGSFYLKVLEGFVGGEIDFVNPMYERYLQNFILDLIDKGILKSVHDVSKGGLLTALAVSCILSNRGFKGILDASIEELFGENQGRFIVSVRSKDSRIFEDIAKSSNINVKKLGEIKSSDDGIDICSAYFDLKELKSIYFDSISKSVEE.

H47 is an active-site residue. Y50 and K82 together coordinate ATP. Mg(2+) is bound at residue E84. Substrate-binding positions include 85–88 and R107; that span reads SHNH. Residue H86 is the Proton acceptor of the active site. Residue D108 participates in Mg(2+) binding. Q229 is a binding site for substrate. D257 is a binding site for Mg(2+). 301 to 303 serves as a coordination point for substrate; that stretch reads ESQ. Residues D486 and G523 each contribute to the ATP site. Position 524 (N524) interacts with Mg(2+). Residue S526 coordinates substrate.

The protein belongs to the FGAMS family. As to quaternary structure, monomer. Part of the FGAM synthase complex composed of 1 PurL, 1 PurQ and 2 PurS subunits.

The protein resides in the cytoplasm. The catalysed reaction is N(2)-formyl-N(1)-(5-phospho-beta-D-ribosyl)glycinamide + L-glutamine + ATP + H2O = 2-formamido-N(1)-(5-O-phospho-beta-D-ribosyl)acetamidine + L-glutamate + ADP + phosphate + H(+). It participates in purine metabolism; IMP biosynthesis via de novo pathway; 5-amino-1-(5-phospho-D-ribosyl)imidazole from N(2)-formyl-N(1)-(5-phospho-D-ribosyl)glycinamide: step 1/2. Functionally, part of the phosphoribosylformylglycinamidine synthase complex involved in the purines biosynthetic pathway. Catalyzes the ATP-dependent conversion of formylglycinamide ribonucleotide (FGAR) and glutamine to yield formylglycinamidine ribonucleotide (FGAM) and glutamate. The FGAM synthase complex is composed of three subunits. PurQ produces an ammonia molecule by converting glutamine to glutamate. PurL transfers the ammonia molecule to FGAR to form FGAM in an ATP-dependent manner. PurS interacts with PurQ and PurL and is thought to assist in the transfer of the ammonia molecule from PurQ to PurL. In Petrotoga mobilis (strain DSM 10674 / SJ95), this protein is Phosphoribosylformylglycinamidine synthase subunit PurL.